The chain runs to 473 residues: tRNA modification GTPase MnmE (473 aa).

(6S)-5-formyl-5,6,7,8-tetrahydrofolate contacts are provided by arginine 30, glutamate 95, and arginine 134. The TrmE-type G domain maps to 230-394; sequence GVSTVIAGRP…LKLLMASMVE (165 aa). GTP is bound by residues 240 to 245, 259 to 265, and 284 to 287; these read NAGKST, SHMPGTT, and DTAG. Residues serine 244 and threonine 265 each coordinate Mg(2+). Lysine 473 serves as a coordination point for (6S)-5-formyl-5,6,7,8-tetrahydrofolate.

This sequence belongs to the TRAFAC class TrmE-Era-EngA-EngB-Septin-like GTPase superfamily. TrmE GTPase family. In terms of assembly, homodimer. Heterotetramer of two MnmE and two MnmG subunits. The cofactor is K(+).

Its subcellular location is the cytoplasm. Its function is as follows. Exhibits a very high intrinsic GTPase hydrolysis rate. Involved in the addition of a carboxymethylaminomethyl (cmnm) group at the wobble position (U34) of certain tRNAs, forming tRNA-cmnm(5)s(2)U34. The chain is tRNA modification GTPase MnmE from Chlorobium luteolum (strain DSM 273 / BCRC 81028 / 2530) (Pelodictyon luteolum).